We begin with the raw amino-acid sequence, 622 residues long: Iron transport multicopper oxidase fetC (622 aa).

Residues 1-20 (MARLVHLTAVLAASIRLAAA) form the signal peptide. Over 21-552 (ATINHDFNVT…DPLPAGFTTR (532 aa)) the chain is Extracellular. 2 N-linked (GlcNAc...) asparagine glycosylation sites follow: N28 and N74. Plastocyanin-like domains follow at residues 29–144 (VTWV…VHDP) and 154–301 (EEIV…SYDK). 2 residues coordinate Cu cation: H80 and H82. N-linked (GlcNAc...) asparagine glycans are attached at residues N87 and N112. The Cu cation site is built by H124 and H126. N-linked (GlcNAc...) asparagine glycans are attached at residues N194, N198, N265, N292, and N358. Residues 362-497 (KSPKVPTLYS…GLVATFVEAP (136 aa)) form the Plastocyanin-like 3 domain. Residues H412, H415, and H417 each coordinate Cu cation. N428 is a glycosylation site (N-linked (GlcNAc...) asparagine). Cu cation-binding residues include H478, C479, H480, and H484. A helical membrane pass occupies residues 553–573 (GIVALVFSCVTGILGICVVAW). The Cytoplasmic portion of the chain corresponds to 574–622 (YGMSQPLEEATAAVATLVREAQVTGSGTSPNHDDGNAAATEAGVLRRRT). The interval 597 to 622 (TGSGTSPNHDDGNAAATEAGVLRRRT) is disordered.

The protein belongs to the multicopper oxidase family.

The protein localises to the cell membrane. Cell surface ferroxidase; part of the reductive iron assimilatory system (RIA), a siderophore-independent high affinity iron uptake mechanism. Required to oxidize Fe(2+) and release it from the transporter. The protein is Iron transport multicopper oxidase fetC of Epichloe festucae (strain E2368).